The chain runs to 200 residues: Putative NAD(P)H nitroreductase Spy0809 (200 aa).

FMN serves as cofactor.

In Streptococcus pyogenes serotype M6 (strain ATCC BAA-946 / MGAS10394), this protein is Putative NAD(P)H nitroreductase Spy0809.